The following is a 348-amino-acid chain: Heat-inducible transcription repressor HrcA (348 aa).

It belongs to the HrcA family.

Negative regulator of class I heat shock genes (grpE-dnaK-dnaJ and groELS operons). Prevents heat-shock induction of these operons. The protein is Heat-inducible transcription repressor HrcA of Lacticaseibacillus casei (strain BL23) (Lactobacillus casei).